Here is a 714-residue protein sequence, read N- to C-terminus: Fatty acid oxidation complex subunit alpha (714 aa).

An enoyl-CoA hydratase region spans residues 1-190; that stretch reads MEMASAFTLN…KLGLVDDVVP (190 aa). Residues 306–714 are 3-hydroxyacyl-CoA dehydrogenase; sequence APLNSVGILG…FWKTTATDLQ (409 aa).

In the N-terminal section; belongs to the enoyl-CoA hydratase/isomerase family. It in the central section; belongs to the 3-hydroxyacyl-CoA dehydrogenase family. As to quaternary structure, heterotetramer of two alpha chains (FadJ) and two beta chains (FadI).

It localises to the cytoplasm. It catalyses the reaction a (3S)-3-hydroxyacyl-CoA = a (2E)-enoyl-CoA + H2O. The enzyme catalyses a 4-saturated-(3S)-3-hydroxyacyl-CoA = a (3E)-enoyl-CoA + H2O. It carries out the reaction a (3S)-3-hydroxyacyl-CoA + NAD(+) = a 3-oxoacyl-CoA + NADH + H(+). The catalysed reaction is (3S)-3-hydroxybutanoyl-CoA = (3R)-3-hydroxybutanoyl-CoA. It functions in the pathway lipid metabolism; fatty acid beta-oxidation. Functionally, catalyzes the formation of a hydroxyacyl-CoA by addition of water on enoyl-CoA. Also exhibits 3-hydroxyacyl-CoA epimerase and 3-hydroxyacyl-CoA dehydrogenase activities. The sequence is that of Fatty acid oxidation complex subunit alpha from Escherichia coli O6:H1 (strain CFT073 / ATCC 700928 / UPEC).